Consider the following 217-residue polypeptide: Probable transaldolase (217 aa).

The active-site Schiff-base intermediate with substrate is lysine 83.

The protein belongs to the transaldolase family. Type 3B subfamily.

Its subcellular location is the cytoplasm. It carries out the reaction D-sedoheptulose 7-phosphate + D-glyceraldehyde 3-phosphate = D-erythrose 4-phosphate + beta-D-fructose 6-phosphate. It participates in carbohydrate degradation; pentose phosphate pathway; D-glyceraldehyde 3-phosphate and beta-D-fructose 6-phosphate from D-ribose 5-phosphate and D-xylulose 5-phosphate (non-oxidative stage): step 2/3. Functionally, transaldolase is important for the balance of metabolites in the pentose-phosphate pathway. The protein is Probable transaldolase of Ruegeria pomeroyi (strain ATCC 700808 / DSM 15171 / DSS-3) (Silicibacter pomeroyi).